Here is a 421-residue protein sequence, read N- to C-terminus: Inhibitor of growth protein 3 (421 aa).

A disordered region spans residues 129 to 164 (PSQPVNNHHAHSHTPVEKRKYNPTSHHTATDHIPEK). Residues Lys148, Lys165, and Lys167 each participate in a glycyl lysine isopeptide (Lys-Gly) (interchain with G-Cter in SUMO2) cross-link. Position 181 is an N6-acetyllysine (Lys181). Lys256 participates in a covalent cross-link: Glycyl lysine isopeptide (Lys-Gly) (interchain with G-Cter in SUMO2). Lys264 carries the post-translational modification N6-acetyllysine. The interval 286 to 324 (TQNASSSAADSRSGRKSKNNTKSSSQQSSSSSSSSSSSS) is disordered. The span at 308–324 (SSSQQSSSSSSSSSSSS) shows a compositional bias: low complexity. The segment at 363–412 (PRYCICNQVSYGEMVGCDNQDCPIEWFHYGCVGLTEAPKGKWFCPQCTAA) adopts a PHD-type zinc-finger fold. Cys366, Cys368, Cys379, Cys384, His390, Cys393, Cys406, and Cys409 together coordinate Zn(2+).

It belongs to the ING family. As to quaternary structure, interacts with H3K4me3 and to a lesser extent with H3K4me2. Component of the NuA4 histone acetyltransferase complex which contains the catalytic subunit KAT5/TIP60 and the subunits EP400, TRRAP/PAF400, BRD8/SMAP, EPC1, DMAP1/DNMAP1, RUVBL1/TIP49, RUVBL2, ING3, actin, ACTL6A/BAF53A, MORF4L1/MRG15, MORF4L2/MRGX, MRGBP, YEATS4/GAS41, VPS72/YL1 and MEAF6. The NuA4 complex interacts with MYC. HTATTIP/TIP60, EPC1, and ING3 together constitute a minimal HAT complex termed Piccolo NuA4. Component of a SWR1-like complex.

It localises to the nucleus. Its function is as follows. Component of the NuA4 histone acetyltransferase (HAT) complex which is involved in transcriptional activation of select genes principally by acetylation of nucleosomal histones H4 and H2A. This modification may both alter nucleosome - DNA interactions and promote interaction of the modified histones with other proteins which positively regulate transcription. This complex may be required for the activation of transcriptional programs associated with oncogene and proto-oncogene mediated growth induction, tumor suppressor mediated growth arrest and replicative senescence, apoptosis, and DNA repair. NuA4 may also play a direct role in DNA repair when directly recruited to sites of DNA damage. Component of a SWR1-like complex that specifically mediates the removal of histone H2A.Z/H2AZ1 from the nucleosome. The chain is Inhibitor of growth protein 3 (Ing3) from Rattus norvegicus (Rat).